The chain runs to 215 residues: NADH-quinone oxidoreductase subunit C (215 aa).

Belongs to the complex I 30 kDa subunit family. NDH-1 is composed of 14 different subunits. Subunits NuoB, C, D, E, F, and G constitute the peripheral sector of the complex.

It is found in the cell inner membrane. The enzyme catalyses a quinone + NADH + 5 H(+)(in) = a quinol + NAD(+) + 4 H(+)(out). NDH-1 shuttles electrons from NADH, via FMN and iron-sulfur (Fe-S) centers, to quinones in the respiratory chain. The immediate electron acceptor for the enzyme in this species is believed to be ubiquinone. Couples the redox reaction to proton translocation (for every two electrons transferred, four hydrogen ions are translocated across the cytoplasmic membrane), and thus conserves the redox energy in a proton gradient. This is NADH-quinone oxidoreductase subunit C from Bordetella parapertussis (strain 12822 / ATCC BAA-587 / NCTC 13253).